The sequence spans 218 residues: Glutathione S-transferase Mu 4 (218 aa).

The 88-residue stretch at 1–88 folds into the GST N-terminal domain; sequence MPMTLGYWDI…YIARKHNLCG (88 aa). Residues 7–8, 46–50, 59–60, and 72–73 each bind glutathione; these read YW, WLSEK, NL, and QS. The region spanning 90-208 is the GST C-terminal domain; that stretch reads TEEEKIRVDI…KTSRFLRTPL (119 aa). Residue Tyr-116 participates in substrate binding.

This sequence belongs to the GST superfamily. Mu family. Homodimer.

The protein resides in the cytoplasm. The catalysed reaction is RX + glutathione = an S-substituted glutathione + a halide anion + H(+). It catalyses the reaction 1-chloro-2,4-dinitrobenzene + glutathione = 2,4-dinitrophenyl-S-glutathione + chloride + H(+). The enzyme catalyses (13S,14S)-epoxy-(4Z,7Z,9E,11E,16Z,19Z)-docosahexaenoate + glutathione = (13R)-S-glutathionyl-(14S)-hydroxy-(4Z,7Z,9E,11E,16Z,19Z)-docosahexaenoate. It carries out the reaction leukotriene C4 = leukotriene A4 + glutathione. Conjugation of reduced glutathione to a wide number of exogenous and endogenous hydrophobic electrophiles. Catalyzes the conjugation of leukotriene A4 with reduced glutathione (GSH) to form leukotriene C4. Can also catalyze the transfer of a glutathionyl group from glutathione (GSH) to 13(S),14(S)-epoxy-docosahexaenoic acid to form maresin conjugate in tissue regeneration 1 (MCTR1), a bioactive lipid mediator that possess potent anti-inflammatory and proresolving actions. This Rattus norvegicus (Rat) protein is Glutathione S-transferase Mu 4 (Gstm4).